Here is a 706-residue protein sequence, read N- to C-terminus: Cyclic nucleotide-gated channel alpha-3 (706 aa).

At 1–189 (MAKISTQYSH…MDPSSNMYYH (189 aa)) the chain is on the cytoplasmic side. The interval 113–177 (RESHVQFNVG…PKKEEKKKDS (65 aa)) is disordered. The span at 147 to 177 (SEKDDKAKKEEKEKKEEKKENPKKEEKKKDS) shows a compositional bias: basic and acidic residues. A helical membrane pass occupies residues 190 to 211 (WLTVIAVPVFYNWCLLVCRACF). The Extracellular portion of the chain corresponds to 212–217 (DELQSE). Residues 218-238 (HLMLWLVLDYSADILYGMDML) traverse the membrane as a helical segment. At 239–265 (VRARTGFLEQGLMVMDASRLWKHYTQT) the chain is on the cytoplasmic side. A helical transmembrane segment spans residues 266-285 (LHFKLDVLSLVPTDLAYFKL). The Extracellular segment spans residues 286–289 (GMNY). A helical transmembrane segment spans residues 290–307 (PELRFNRLLKLARLFEFF). The Cytoplasmic segment spans residues 308–317 (DRTETRTNYP). The tract at residues 317-425 (PNMFRIGNLV…GNVGSMISNM (109 aa)) is ion conduction pathway. The helical transmembrane segment at 318 to 340 (NMFRIGNLVLYILIIIHWNACIY) threads the bilayer. The Extracellular segment spans residues 341-366 (FAISKFIGFGTDSWVYPNVSNPEYGR). N-linked (GalNAc...) asparagine glycosylation occurs at Asn-358. The next 2 helical transmembrane spans lie at 367–397 (LSRK…DEEY) and 398–422 (LFVV…GSMI). Positions 384–387 (TIGE) are selectivity filter. The Cytoplasmic segment spans residues 423–706 (SNMNASRAEF…DAPQTEASQP (284 aa)). A C-linker region spans residues 427 to 504 (ASRAEFQAKI…TLRKVRIFQD (78 aa)). The cyclic nucleotide-binding domain stretch occupies residues 507 to 627 (AGLLVELVLK…EEKGRQILMK (121 aa)). Residues Gly-567, Glu-568, Ser-570, Arg-583, Thr-584, and Asp-628 each coordinate 3',5'-cyclic GMP. A coiled-coil region spans residues 645-688 (IEEKVEHLETSLDSLQTRFARLLAEYNATQMKVKQRLSQLESQV). Positions 685 to 706 (ESQVKMGLPPDGDAPQTEASQP) are disordered.

Belongs to the cyclic nucleotide-gated cation channel (TC 1.A.1.5) family. CNGA3 subfamily. Forms heterotetrameric channels composed of CNGA3 and CNGB3 subunits with 3:1 stoichiometry. Testis, kidney, retinal cone (at protein level) and heart.

It localises to the cell membrane. The catalysed reaction is Ca(2+)(in) = Ca(2+)(out). It catalyses the reaction Na(+)(in) = Na(+)(out). The enzyme catalyses K(+)(in) = K(+)(out). It carries out the reaction NH4(+)(in) = NH4(+)(out). The catalysed reaction is Rb(+)(in) = Rb(+)(out). It catalyses the reaction Li(+)(in) = Li(+)(out). The enzyme catalyses Cs(+)(in) = Cs(+)(out). With respect to regulation, ca(2+) influx is inhibited by extracellular Mg(2+) ions. Pore-forming subunit of the cone cyclic nucleotide-gated channel. Mediates cone photoresponses at bright light converting transient changes in intracellular cGMP levels into electrical signals. In the dark, cGMP levels are high and keep the channel open enabling a steady inward current carried by Na(+) and Ca(2+) ions that leads to membrane depolarization and neurotransmitter release from synaptic terminals. Upon photon absorption cGMP levels decline leading to channel closure and membrane hyperpolarization that ultimately slows neurotransmitter release and signals the presence of light, the end point of the phototransduction cascade. Pore-forming subunit of the gustatory cyclic nucleotide-gated channel. In the taste buds, may sense oral extracellular pH and conduct ion currents that modulate the excitability of taste cells. Conducts cGMP- and cAMP-gated ion currents, with permeability for monovalent and divalent cations. This chain is Cyclic nucleotide-gated channel alpha-3, found in Bos taurus (Bovine).